The chain runs to 206 residues: Large ribosomal subunit protein uL13w (206 aa).

This sequence belongs to the universal ribosomal protein uL13 family.

The protein is Large ribosomal subunit protein uL13w (RPL13AD) of Arabidopsis thaliana (Mouse-ear cress).